We begin with the raw amino-acid sequence, 164 residues long: Phosphopantetheine adenylyltransferase (164 aa).

Thr-14 is a substrate binding site. Residues Thr-14–Phe-15 and His-22 contribute to the ATP site. 3 residues coordinate substrate: Lys-46, Met-78, and Arg-92. Residues Gly-93–Arg-95, Glu-103, and His-128–Thr-134 each bind ATP.

This sequence belongs to the bacterial CoaD family. As to quaternary structure, homohexamer. Mg(2+) serves as cofactor.

It is found in the cytoplasm. It catalyses the reaction (R)-4'-phosphopantetheine + ATP + H(+) = 3'-dephospho-CoA + diphosphate. The protein operates within cofactor biosynthesis; coenzyme A biosynthesis; CoA from (R)-pantothenate: step 4/5. In terms of biological role, reversibly transfers an adenylyl group from ATP to 4'-phosphopantetheine, yielding dephospho-CoA (dPCoA) and pyrophosphate. In Vibrio vulnificus (strain CMCP6), this protein is Phosphopantetheine adenylyltransferase.